The sequence spans 335 residues: Mitochondrial carrier protein CoAc2 (335 aa).

6 helical membrane-spanning segments follow: residues 12–32 (SGPG…AGGV), 75–95 (FYRG…LHYM), 119–139 (LVAG…LDLV), 187–207 (GMAP…YFYE), 225–242 (LGCG…TYPL), and 280–302 (LFSG…FTVY). 3 Solcar repeats span residues 17 to 103 (PLAV…YRRW), 113 to 212 (QGPV…MKSH), and 219 to 308 (KGII…MKVC).

The protein belongs to the mitochondrial carrier (TC 2.A.29) family. Expressed throughout the plant.

The protein resides in the mitochondrion inner membrane. In terms of biological role, required for the accumulation of coenzyme A in the mitochondrial matrix. This chain is Mitochondrial carrier protein CoAc2, found in Zea mays (Maize).